We begin with the raw amino-acid sequence, 638 residues long: Growth hormone receptor (638 aa).

An N-terminal signal peptide occupies residues 1–18 (MDLWQLLLTLAVAGSGNA). Residues 19 to 264 (VSGSEATPAI…SPFACEEDFQ (246 aa)) lie on the Extracellular side of the membrane. 2 cysteine pairs are disulfide-bonded: C56–C66 and C101–C112. A glycan (N-linked (GlcNAc...) asparagine) is linked at N115. C126 and C140 are disulfide-bonded. The Fibronectin type-III domain maps to 151 to 254 (PPIGLNWTLL…EVLYVALPQM (104 aa)). Residues N156, N161, and N200 are each glycosylated (N-linked (GlcNAc...) asparagine). A WSXWS motif motif is present at residues 240-244 (YGEFS). A helical transmembrane segment spans residues 265–288 (FPWFLIIIFGIFGLTMILFLFIFS). Residues 289-638 (KQQRIKMLIL…STDQLNKIMP (350 aa)) are Cytoplasmic-facing. The tract at residues 294–379 (KMLILPPVPV…HEKSLNILGA (86 aa)) is required for JAK2 binding. A Box 1 motif motif is present at residues 297-305 (ILPPVPVPK). Residues 340–349 (DSWVEFIELD) carry the UbE motif motif. The residue at position 341 (S341) is a Phosphoserine. The span at 429–446 (KNQSNSPSTDTAPNTQQP) shows a compositional bias: polar residues. The segment at 429–448 (KNQSNSPSTDTAPNTQQPGV) is disordered. Residues Y487 and Y595 each carry the phosphotyrosine modification.

The protein belongs to the type I cytokine receptor family. Type 1 subfamily. As to quaternary structure, on growth hormone (GH) binding, forms homodimers and binds JAK2 via a box 1-containing domain. In terms of processing, the soluble form (GHBP) is produced by phorbol ester-promoted proteolytic cleavage at the cell surface (shedding) by ADAM17/TACE. Shedding is inhibited by growth hormone (GH) binding to the receptor probably due to a conformational change in GHR rendering the receptor inaccessible to ADAM17. Post-translationally, on GH binding, phosphorylated on tyrosine residues in the cytoplasmic domain by JAK2. Ubiquitinated by the ECS(SOCS2) complex following ligand-binding and phosphorylation by JAK2, leading to its degradation by the proteasome. Regulation by the ECS(SOCS2) complex acts as a negative feedback loop of growth hormone receptor signaling. Ubiquitination is not sufficient for GHR internalization.

It is found in the cell membrane. Its subcellular location is the secreted. Functionally, receptor for pituitary gland growth hormone (GH1) involved in regulating postnatal body growth. On ligand binding, couples to the JAK2/STAT5 pathway. Its function is as follows. The soluble form (GHBP) acts as a reservoir of growth hormone in plasma and may be a modulator/inhibitor of GH signaling. The chain is Growth hormone receptor (GHR) from Ailuropoda melanoleuca (Giant panda).